A 305-amino-acid chain; its full sequence is Methionyl-tRNA formyltransferase (305 aa).

111-114 (SILP) contributes to the (6S)-5,6,7,8-tetrahydrofolate binding site.

The protein belongs to the Fmt family.

The catalysed reaction is L-methionyl-tRNA(fMet) + (6R)-10-formyltetrahydrofolate = N-formyl-L-methionyl-tRNA(fMet) + (6S)-5,6,7,8-tetrahydrofolate + H(+). Its function is as follows. Attaches a formyl group to the free amino group of methionyl-tRNA(fMet). The formyl group appears to play a dual role in the initiator identity of N-formylmethionyl-tRNA by promoting its recognition by IF2 and preventing the misappropriation of this tRNA by the elongation apparatus. This is Methionyl-tRNA formyltransferase from Wolinella succinogenes (strain ATCC 29543 / DSM 1740 / CCUG 13145 / JCM 31913 / LMG 7466 / NCTC 11488 / FDC 602W) (Vibrio succinogenes).